Consider the following 307-residue polypeptide: Agmatinase (307 aa).

Residues His128, Asp151, His153, Asp155, Asp232, and Asp234 each coordinate Mn(2+).

It belongs to the arginase family. Agmatinase subfamily. It depends on Mn(2+) as a cofactor.

The catalysed reaction is agmatine + H2O = urea + putrescine. Its pathway is amine and polyamine biosynthesis; putrescine biosynthesis via agmatine pathway; putrescine from agmatine: step 1/1. Its function is as follows. Catalyzes the formation of putrescine from agmatine. In Neisseria meningitidis serogroup C (strain 053442), this protein is Agmatinase.